Here is a 351-residue protein sequence, read N- to C-terminus: Ferredoxin--NADP reductase (351 aa).

Residues Thr-14, Asp-33, Gln-41, Tyr-46, Ala-86, Phe-121, Asp-287, and Thr-328 each coordinate FAD.

This sequence belongs to the ferredoxin--NADP reductase type 2 family. In terms of assembly, homodimer. The cofactor is FAD.

The enzyme catalyses 2 reduced [2Fe-2S]-[ferredoxin] + NADP(+) + H(+) = 2 oxidized [2Fe-2S]-[ferredoxin] + NADPH. The sequence is that of Ferredoxin--NADP reductase from Flavobacterium psychrophilum (strain ATCC 49511 / DSM 21280 / CIP 103535 / JIP02/86).